Consider the following 503-residue polypeptide: 2-phosphoxylose phosphatase 1 (503 aa).

Over 1 to 6 (MLARSR) the chain is Cytoplasmic. The helical; Signal-anchor for type II membrane protein transmembrane segment at 7-27 (FILVLVVGALLAVLSFSLQYL) threads the bilayer. Residues 28-503 (HLIPTNPVAE…YQQACHQTVL (476 aa)) lie on the Lumenal side of the membrane. A disordered region spans residues 38–63 (QRSAGRSRKRVNPVLHTDPPAPDPIR). Asn-73 carries an N-linked (GlcNAc...) asparagine glycan. Catalysis depends on His-98, which acts as the Nucleophile. Residue Asn-365 is glycosylated (N-linked (GlcNAc...) asparagine). Asp-396 functions as the Proton donor in the catalytic mechanism. N-linked (GlcNAc...) asparagine glycosylation is present at Asn-490.

The protein belongs to the histidine acid phosphatase family.

The protein resides in the golgi apparatus membrane. The enzyme catalyses 3-O-[beta-D-GlcA-(1-&gt;3)-beta-D-Gal-(1-&gt;3)-beta-D-Gal-(1-&gt;4)-beta-D-2-O-P-Xyl]-L-seryl-[protein] + H2O = 3-O-(beta-D-GlcA-(1-&gt;3)-beta-D-Gal-(1-&gt;3)-beta-D-Gal-(1-&gt;4)-beta-D-Xyl)-L-seryl-[protein] + phosphate. Functionally, responsible for the 2-O-dephosphorylation of xylose in the glycosaminoglycan-protein linkage region of proteoglycans thereby regulating the amount of mature glycosaminoglycan (GAG) chains. Sulfated glycosaminoglycans (GAGs), including heparan sulfate and chondroitin sulfate, are synthesized on the so-called common GAG-protein linkage region (GlcUAbeta1-3Galbeta1-3Galbeta1-4Xylbeta1-O-Ser) of core proteins, which is formed by the stepwise addition of monosaccharide residues by the respective specific glycosyltransferases. This Danio rerio (Zebrafish) protein is 2-phosphoxylose phosphatase 1.